A 228-amino-acid chain; its full sequence is MKVPIILVNFKVYETSYGRRGLEMAKIVEKVALETSTEIIIAVPATMITRVAESVTIPVYAQHVDGVPEGAHTGAVTPELIKDAGAKGSLLNHSERRVRMDEMDDALKRMKKLGLESVICVDRYELVAPMALLKPTAVLVEPPELIGTGVSVSKARPEVITSAVDEIRKVQGVYLIAGAGITSGEDVYVAMKLGSDGVGAASAIMKAKEPQKVLLDFVNGAIRALEER.

9–11 (NFK) provides a ligand contact to substrate. Catalysis depends on His-93, which acts as the Electrophile. Glu-141 acts as the Proton acceptor in catalysis. Substrate is bound by residues Ile-146, Gly-180, and 201 to 202 (AS).

The protein belongs to the triosephosphate isomerase family. Homotetramer; dimer of dimers.

The protein resides in the cytoplasm. It catalyses the reaction D-glyceraldehyde 3-phosphate = dihydroxyacetone phosphate. It participates in carbohydrate biosynthesis; gluconeogenesis. It functions in the pathway carbohydrate degradation; glycolysis; D-glyceraldehyde 3-phosphate from glycerone phosphate: step 1/1. Its function is as follows. Involved in the gluconeogenesis. Catalyzes stereospecifically the conversion of dihydroxyacetone phosphate (DHAP) to D-glyceraldehyde-3-phosphate (G3P). This is Triosephosphate isomerase from Metallosphaera sedula (strain ATCC 51363 / DSM 5348 / JCM 9185 / NBRC 15509 / TH2).